A 701-amino-acid polypeptide reads, in one-letter code: ABC transporter G family member 23 (701 aa).

Residues 7 to 237 (INLNNVSRSY…YECSLLEDVY (231 aa)) enclose the ABC transporter domain. 39 to 46 (GSSGSGKT) provides a ligand contact to ATP. The next 6 helical transmembrane spans lie at 335–355 (FPLVFEIISPSLLITLFFLAI), 493–513 (FLAPAMICIITYVHCMNFLSI), 541–561 (HILAHIPILLVQFSIQLLIAV), 574–596 (LIYLFFILINTVGMCQGILISLI), 608–628 (LAIFICSLCMAGIIWPTEAII), and 665–685 (LIIIISYIIGTFSLIVISTPI). The region spanning 459-686 (FQKAFNKIAN…SLIVISTPIG (228 aa)) is the ABC transmembrane type-2 domain.

The protein belongs to the ABC transporter superfamily. ABCG family.

The protein resides in the membrane. The sequence is that of ABC transporter G family member 23 (abcG23) from Dictyostelium discoideum (Social amoeba).